The following is a 993-amino-acid chain: Replication protein 1a (993 aa).

The methyltransferase stretch occupies residues 50–409 (RNVLSVKDSE…TIVINGMSMQ (360 aa)). The 219-residue stretch at 72–290 (HLTQQEFAPH…HDWENIKSFL (219 aa)) folds into the Alphavirus-like MT domain. Positions 537–565 (LAQPVDEVSDSPEVPSSTPDDTADVCGKE) are disordered. The (+)RNA virus helicase ATP-binding domain maps to 687 to 838 (CVICNSESLS…KIIPDETSDA (152 aa)). Residues 712–975 (VDGVAGCGKT…LTRHKVTFRY (264 aa)) form an ATP-dependent helicase region. Residue 714 to 721 (GVAGCGKT) participates in ATP binding. Positions 839–993 (DTTFRSPQDV…DLIAECIARA (155 aa)) constitute a (+)RNA virus helicase C-terminal domain.

The protein belongs to the bromoviridae replication protein 1a family. As to quaternary structure, interacts with RNA-directed RNA polymerase 2a.

The protein resides in the host endoplasmic reticulum membrane. In terms of biological role, involved in the virus replication. Contains a helicase domain and a methyltransferase domain. The methyltransferase domain is probably involved in viral RNA capping. Involved in the formation of ER membrane spherular invaginations in which RNA replication complexes form. This chain is Replication protein 1a, found in Cucumber mosaic virus (strain O) (CMV).